We begin with the raw amino-acid sequence, 504 residues long: Zinc finger CCCH domain-containing protein 18 (504 aa).

Residues 40 to 69 (SNADLLEVHEELLAAIKDAEEGLLHLKRSR) adopt a coiled-coil conformation. The interval 77-105 (IFPNQEPTSEAPEVAVDPPDDVEPEPLEP) is disordered. Acidic residues predominate over residues 94 to 104 (PPDDVEPEPLE). Residues 146-173 (SENMSMCKFFLQQRCRFGSNCRLSHGIV) form a C3H1-type zinc finger. The disordered stretch occupies residues 230 to 276 (GSSARLPSDSLSISEYADESDEDGEGSSSDEGSDFSEDGDQEDESVH). 2 stretches are compositionally biased toward acidic residues: residues 245-254 (YADESDEDGE) and 260-272 (EGSD…DQED). In terms of domain architecture, G-patch spans 304-350 (TRGVASKMMAKMGYREGMGLGVSGQGMLDPIPVKVLPPKQSLDHAVA). Disordered stretches follow at residues 351 to 390 (ASEV…EEER), 406 to 432 (AEGS…DRRS), and 482 to 504 (EATH…WLKF). The segment covering 361-374 (GKKRSRGGKRKREK) has biased composition (basic residues). Composition is skewed to basic and acidic residues over residues 375-390 (KFAE…EEER), 413-432 (SKKD…DRRS), and 493-504 (ARKEKEKKWLKF). The stretch at 430-500 (RRSLLAYDDE…AVARKEKEKK (71 aa)) forms a coiled coil.

In Oryza sativa subsp. japonica (Rice), this protein is Zinc finger CCCH domain-containing protein 18.